The chain runs to 530 residues: MDSTMMPHTIRQNTIFGKTNFAQQKLGLYQVVAPASPVCSRPGSSCSQPPTLLGNNPGVLTPTGSLSPSSFKPAIMLETEFGDNPYYPSTPPLSTSGSAVGSPKSCDILQTPLNPMFSGLDGFSGVKSGFESIESSILSWTSCDSPPMTPVYIYSQPSRVPSLSSTTSDLSNIPCPSLSPSPAPYARSVSSENDVDFCDPRNLTVSCTSNPSLSDFTLDCLIEEDSSCSEQGSIDTSVIVQPTFDFSPAIASGLPAFEDFSDFESDNELSSLVKSGGVYRPRACTGSSVVSLGHGSFIGEEDFSLDENETLRFPSPSPPSIKPVDNSHKGKRRKKSSEDTRSVEPVMNTAATAADESQTVEVEQSDRASPAPSESNSSAGADTPSAPLPAPTNRRGRKQSLTEDPSKTFVCDLCNRRFRRQEHLKRHYRSLHTQEKPFECNECGKKFSRSDNLAQHARTHASGGAIVMNLIDNVDPSAYDAGVVAPPSVDDHANYGKVLFQIASEVPGSASELSSEEASDNGKKKRKRSD.

C2H2-type zinc fingers lie at residues 409 to 437 (FVCD…QEKP) and 438 to 465 (FECN…SGGA).

The protein localises to the nucleus. It is found in the cytoplasm. Its function is as follows. Transcription factor that acts as a key downstream transcription factor in the HOG1-MAPK pathway. Plays crucial roles in the regulation of dimorphism transition, aggravated pigmentation, conidiation, microsclerotia formation and subsequent virulence towards Spodoptera litura larvae. More specifically regulates the expression of genes involved in antioxidation, pigment biosynthesis and ion transport and storage. The chain is C2H2-type transcription factor MSN2 from Metarhizium rileyi (strain RCEF 4871) (Nomuraea rileyi).